The following is a 203-amino-acid chain: Glycerol-3-phosphate acyltransferase (203 aa).

6 helical membrane-spanning segments follow: residues 3–23 (NLILYAVSYLLGSIPSGLILA), 61–81 (ILTVVCDVLKGVLPLIVASFL), 87–107 (VLWTMAVLSVAGHCFSIFLGF), 118–138 (GVLAFFLPVEIIIALVVWFLV), 144–164 (ISSLASLCALIALIASSFIIH), and 172–192 (THAPILIIAFLVVYKHIPNIV).

This sequence belongs to the PlsY family. In terms of assembly, probably interacts with PlsX.

The protein localises to the cell inner membrane. The enzyme catalyses an acyl phosphate + sn-glycerol 3-phosphate = a 1-acyl-sn-glycero-3-phosphate + phosphate. The protein operates within lipid metabolism; phospholipid metabolism. Catalyzes the transfer of an acyl group from acyl-phosphate (acyl-PO(4)) to glycerol-3-phosphate (G3P) to form lysophosphatidic acid (LPA). This enzyme utilizes acyl-phosphate as fatty acyl donor, but not acyl-CoA or acyl-ACP. This Campylobacter concisus (strain 13826) protein is Glycerol-3-phosphate acyltransferase.